Reading from the N-terminus, the 134-residue chain is Putative pre-16S rRNA nuclease (134 aa).

It belongs to the YqgF nuclease family.

It is found in the cytoplasm. Could be a nuclease involved in processing of the 5'-end of pre-16S rRNA. The polypeptide is Putative pre-16S rRNA nuclease (Helicobacter pylori (strain Shi470)).